Reading from the N-terminus, the 99-residue chain is Aspartyl/glutamyl-tRNA(Asn/Gln) amidotransferase subunit C (99 aa).

This sequence belongs to the GatC family. Heterotrimer of A, B and C subunits.

The enzyme catalyses L-glutamyl-tRNA(Gln) + L-glutamine + ATP + H2O = L-glutaminyl-tRNA(Gln) + L-glutamate + ADP + phosphate + H(+). The catalysed reaction is L-aspartyl-tRNA(Asn) + L-glutamine + ATP + H2O = L-asparaginyl-tRNA(Asn) + L-glutamate + ADP + phosphate + 2 H(+). Allows the formation of correctly charged Asn-tRNA(Asn) or Gln-tRNA(Gln) through the transamidation of misacylated Asp-tRNA(Asn) or Glu-tRNA(Gln) in organisms which lack either or both of asparaginyl-tRNA or glutaminyl-tRNA synthetases. The reaction takes place in the presence of glutamine and ATP through an activated phospho-Asp-tRNA(Asn) or phospho-Glu-tRNA(Gln). This chain is Aspartyl/glutamyl-tRNA(Asn/Gln) amidotransferase subunit C, found in Polaromonas sp. (strain JS666 / ATCC BAA-500).